Here is a 251-residue protein sequence, read N- to C-terminus: 1-(5-phosphoribosyl)-5-[(5-phosphoribosylamino)methylideneamino] imidazole-4-carboxamide isomerase (251 aa).

Asp-8 functions as the Proton acceptor in the catalytic mechanism. Asp-131 serves as the catalytic Proton donor.

The protein belongs to the HisA/HisF family.

It is found in the cytoplasm. The enzyme catalyses 1-(5-phospho-beta-D-ribosyl)-5-[(5-phospho-beta-D-ribosylamino)methylideneamino]imidazole-4-carboxamide = 5-[(5-phospho-1-deoxy-D-ribulos-1-ylimino)methylamino]-1-(5-phospho-beta-D-ribosyl)imidazole-4-carboxamide. Its pathway is amino-acid biosynthesis; L-histidine biosynthesis; L-histidine from 5-phospho-alpha-D-ribose 1-diphosphate: step 4/9. The polypeptide is 1-(5-phosphoribosyl)-5-[(5-phosphoribosylamino)methylideneamino] imidazole-4-carboxamide isomerase (Burkholderia pseudomallei (strain 1710b)).